Here is a 271-residue protein sequence, read N- to C-terminus: L-aspartate dehydrogenase (271 aa).

NAD(+) is bound by residues Ala-124 and Asn-192. The active site involves His-222.

It belongs to the L-aspartate dehydrogenase family.

The enzyme catalyses L-aspartate + NADP(+) + H2O = oxaloacetate + NH4(+) + NADPH + H(+). It carries out the reaction L-aspartate + NAD(+) + H2O = oxaloacetate + NH4(+) + NADH + H(+). It participates in cofactor biosynthesis; NAD(+) biosynthesis; iminoaspartate from L-aspartate (dehydrogenase route): step 1/1. In terms of biological role, specifically catalyzes the NAD or NADP-dependent dehydrogenation of L-aspartate to iminoaspartate. This is L-aspartate dehydrogenase from Methanosarcina mazei (strain ATCC BAA-159 / DSM 3647 / Goe1 / Go1 / JCM 11833 / OCM 88) (Methanosarcina frisia).